The primary structure comprises 75 residues: Bacteriocin lactococcin-A (75 aa).

The propeptide occupies 1–21 (MKNQLNFNIVSDEELSEANGG). The chain crosses the membrane as a helical span at residues 30–52 (AAGDLYYNTNTHKYVYQQTQNAF).

It is found in the secreted. It localises to the host cell membrane. Its function is as follows. Kills Lactococci. The chain is Bacteriocin lactococcin-A (lcnA) from Lactococcus lactis subsp. cremoris (Streptococcus cremoris).